Here is a 463-residue protein sequence, read N- to C-terminus: O-acetyltransferase SAT5 (463 aa).

This sequence belongs to the trichothecene 3-O-acetyltransferase family.

Its pathway is mycotoxin biosynthesis. Its function is as follows. O-acetyltransferase; part of the satratoxin SC1 cluster involved in the biosynthesis of satratoxins, trichothecene mycotoxins that are associated with human food poisonings. Satratoxins are suggested to be made by products of multiple gene clusters (SC1, SC2 and SC3) that encode 21 proteins in all, including polyketide synthases, acetyltransferases, and other enzymes expected to modify the trichothecene skeleton. SC1 encodes 10 proteins, SAT1 to SAT10. The largest are SAT8, which encodes a putative polyketide synthase (PKS) with a conventional non-reducing architecture, and SAT10, a putative protein containing four ankyrin repeats and thus may be involved in protein scaffolding. The putative short-chain reductase SAT3 may assist the PKS in some capacity. SAT6 contains a secretory lipase domain and acts probably as a trichothecene esterase. SAT5 encodes a putative acetyltransferase, and so, with SAT6, may affect endogenous protection from toxicity. The probable transcription factor SAT9 may regulate the expression of the SC1 cluster. SC2 encodes proteins SAT11 to SAT16, the largest of which encodes the putative reducing PKS SAT13. SAT11 is a cytochrome P450 monooxygenase, while SAT14 and SAT16 are probable acetyltransferases. The SC2 cluster may be regulated by the transcription factor SAT15. SC3 is a small cluster that encodes 5 proteins, SAT17 to SAT21. SAT21 is a putative MFS-type transporter which may have a role in exporting secondary metabolites. The four other proteins putatively encoded in SC3 include the taurine hydroxylase-like protein SAT17, the O-methyltransferase SAT18, the acetyltransferase SAT19, and the Cys6-type zinc finger SAT20, the latter being probably involved in regulation of SC3 expression. This chain is O-acetyltransferase SAT5, found in Stachybotrys chartarum (strain CBS 109288 / IBT 7711) (Toxic black mold).